The chain runs to 340 residues: 4-hydroxy-2-oxovalerate aldolase (340 aa).

A Pyruvate carboxyltransferase domain is found at Val8–Met260. A substrate-binding site is contributed by Arg16 to Asp17. Residue Asp17 coordinates Mn(2+). His20 (proton acceptor) is an active-site residue. Substrate contacts are provided by Ser170 and His199. Mn(2+) contacts are provided by His199 and His201. Residue Tyr290 coordinates substrate.

The protein belongs to the 4-hydroxy-2-oxovalerate aldolase family.

The enzyme catalyses (S)-4-hydroxy-2-oxopentanoate = acetaldehyde + pyruvate. In Shewanella halifaxensis (strain HAW-EB4), this protein is 4-hydroxy-2-oxovalerate aldolase.